The following is a 329-amino-acid chain: Ankyrin repeat and SOCS box protein 5 (329 aa).

6 ANK repeats span residues 69 to 98, 102 to 131, 135 to 164, 167 to 196, 200 to 229, and 232 to 261; these read ADRS…NVNA, DHVT…NVNA, DGVT…KPQL, CLPS…DVDQ, HLGT…DVQK, and YWDT…DINA. Positions 278–329 constitute an SOCS box domain; that stretch reads LVERLLLQHEATPSSLCQLCRLCIRNYIGRPRLHLIPQLQLPTLLQNFLQYR.

This sequence belongs to the ankyrin SOCS box (ASB) family.

It functions in the pathway protein modification; protein ubiquitination. May be a substrate-recognition component of a SCF-like ECS (Elongin-Cullin-SOCS-box protein) E3 ubiquitin-protein ligase complex which mediates the ubiquitination and subsequent proteasomal degradation of target proteins. May play a role in the initiation of arteriogenesis. This is Ankyrin repeat and SOCS box protein 5 (ASB5) from Bos taurus (Bovine).